A 320-amino-acid chain; its full sequence is Cytochrome f (320 aa).

Positions 1–36 are cleaved as a signal peptide; that stretch reads MKLNSLINLIQKSIYSCTLLLTILNIICIAPNSSNA. Residues Phe-37, Cys-57, Cys-60, and His-61 each contribute to the heme site. A helical transmembrane segment spans residues 286–305; it reads IKGMIAFFFVSVLAQIFFVL.

This sequence belongs to the cytochrome f family. In terms of assembly, the 4 large subunits of the cytochrome b6-f complex are cytochrome b6, subunit IV (17 kDa polypeptide, petD), cytochrome f and the Rieske protein, while the 4 small subunits are PetG, PetL, PetM and PetN. The complex functions as a dimer. Heme is required as a cofactor.

Its subcellular location is the plastid. The protein resides in the chloroplast thylakoid membrane. Functionally, component of the cytochrome b6-f complex, which mediates electron transfer between photosystem II (PSII) and photosystem I (PSI), cyclic electron flow around PSI, and state transitions. The protein is Cytochrome f (petA) of Porphyra purpurea (Red seaweed).